The primary structure comprises 179 residues: Large ribosomal subunit protein uL5 (179 aa).

The protein belongs to the universal ribosomal protein uL5 family. Part of the 50S ribosomal subunit; part of the 5S rRNA/L5/L18/L25 subcomplex. Contacts the 5S rRNA and the P site tRNA. Forms a bridge to the 30S subunit in the 70S ribosome.

This is one of the proteins that bind and probably mediate the attachment of the 5S RNA into the large ribosomal subunit, where it forms part of the central protuberance. In the 70S ribosome it contacts protein S13 of the 30S subunit (bridge B1b), connecting the 2 subunits; this bridge is implicated in subunit movement. Contacts the P site tRNA; the 5S rRNA and some of its associated proteins might help stabilize positioning of ribosome-bound tRNAs. This is Large ribosomal subunit protein uL5 from Staphylococcus haemolyticus (strain JCSC1435).